A 570-amino-acid polypeptide reads, in one-letter code: Hydroxylamine reductase (570 aa).

[4Fe-4S] cluster contacts are provided by Cys5, Cys8, Cys17, and Cys23. Residues His266, Glu290, Cys334, Cys425, Cys453, Cys478, Glu513, and Lys515 each contribute to the hybrid [4Fe-2O-2S] cluster site. Residue Cys425 is modified to Cysteine persulfide.

This sequence belongs to the HCP family. It depends on [4Fe-4S] cluster as a cofactor. The cofactor is hybrid [4Fe-2O-2S] cluster.

The protein localises to the cytoplasm. The enzyme catalyses A + NH4(+) + H2O = hydroxylamine + AH2 + H(+). Catalyzes the reduction of hydroxylamine to form NH(3) and H(2)O. This is Hydroxylamine reductase from Clostridium botulinum (strain 657 / Type Ba4).